We begin with the raw amino-acid sequence, 419 residues long: Hyaluronan synthase (419 aa).

5 consecutive transmembrane segments (helical) span residues 8–28, 33–53, 318–338, 345–365, and 376–396; these read LIVL…MYLF, VGIY…LSFL, IVAL…VAIG, AIQL…IVAL, and PASF…LQPL.

The protein belongs to the NodC/HAS family. Mg(2+) is required as a cofactor.

The protein localises to the cell membrane. The catalysed reaction is [hyaluronan](n) + UDP-N-acetyl-alpha-D-glucosamine = N-acetyl-beta-D-glucosaminyl-(1-&gt;4)-[hyaluronan](n) + UDP + H(+). It carries out the reaction N-acetyl-beta-D-glucosaminyl-(1-&gt;4)-[hyaluronan](n) + UDP-alpha-D-glucuronate = [hyaluronan](n+1) + UDP + H(+). It participates in glycan biosynthesis; hyaluronan biosynthesis. Its function is as follows. Glycosaminoglycan synthesis. The hyaluronic acid capsule is involved in the pathogenicity of group A Streptococci; it may be the major virulence determinant. This is Hyaluronan synthase (hasA) from Streptococcus pyogenes serotype M1.